A 141-amino-acid chain; its full sequence is UPF0179 protein Cmaq_1008 (141 aa).

The protein belongs to the UPF0179 family.

The polypeptide is UPF0179 protein Cmaq_1008 (Caldivirga maquilingensis (strain ATCC 700844 / DSM 13496 / JCM 10307 / IC-167)).